The following is a 507-amino-acid chain: Sulfatase (507 aa).

A signal peptide spans 1-18 (MKTRYFLLLGICMLSCRT). Positions 39, 40, and 79 each coordinate Ca(2+). Cys79 (nucleophile) is an active-site residue. Cys79 carries the post-translational modification 3-oxoalanine (Cys). His139 is an active-site residue. Residues Asp325 and His326 each contribute to the Ca(2+) site.

This sequence belongs to the sulfatase family. The cofactor is Ca(2+). In terms of processing, the conversion to 3-oxoalanine (also known as C-formylglycine, FGly), of a serine or cysteine residue in prokaryotes and of a cysteine residue in eukaryotes, is critical for catalytic activity. This post-translational modification is severely defective in multiple sulfatase deficiency (MSD).

It is found in the periplasm. In terms of biological role, sulfatase that may be involved in ulvan degradation. Ulvan is the main polysaccharide component of the Ulvales (green seaweed) cell wall. It is composed of disaccharide building blocks comprising 3-sulfated rhamnose (Rha3S) linked to D-glucuronic acid (GlcA), L-iduronic acid (IduA), or D-xylose (Xyl). Has no activity on different ulvan polymers. This Formosa agariphila (strain DSM 15362 / KCTC 12365 / LMG 23005 / KMM 3901 / M-2Alg 35-1) protein is Sulfatase.